The following is a 341-amino-acid chain: Anthranilate phosphoribosyltransferase (341 aa).

Residues Gly-79, 82 to 83, Thr-87, 89 to 92, 107 to 115, and Ser-119 each bind 5-phospho-alpha-D-ribose 1-diphosphate; these read GD, NIST, and KHGNRAATS. Gly-79 serves as a coordination point for anthranilate. Ser-91 provides a ligand contact to Mg(2+). Asn-110 lines the anthranilate pocket. Arg-165 contributes to the anthranilate binding site. Residues Asp-224 and Glu-225 each coordinate Mg(2+).

The protein belongs to the anthranilate phosphoribosyltransferase family. Homodimer. Mg(2+) serves as cofactor.

It carries out the reaction N-(5-phospho-beta-D-ribosyl)anthranilate + diphosphate = 5-phospho-alpha-D-ribose 1-diphosphate + anthranilate. It participates in amino-acid biosynthesis; L-tryptophan biosynthesis; L-tryptophan from chorismate: step 2/5. Functionally, catalyzes the transfer of the phosphoribosyl group of 5-phosphorylribose-1-pyrophosphate (PRPP) to anthranilate to yield N-(5'-phosphoribosyl)-anthranilate (PRA). This is Anthranilate phosphoribosyltransferase from Symbiobacterium thermophilum (strain DSM 24528 / JCM 14929 / IAM 14863 / T).